Reading from the N-terminus, the 118-residue chain is Small ribosomal subunit protein uS13 (118 aa).

The segment at 94–118 (SLPLRGQRTKTNARTRKGPRKAIKK) is disordered.

This sequence belongs to the universal ribosomal protein uS13 family. As to quaternary structure, part of the 30S ribosomal subunit. Forms a loose heterodimer with protein S19. Forms two bridges to the 50S subunit in the 70S ribosome.

Functionally, located at the top of the head of the 30S subunit, it contacts several helices of the 16S rRNA. In the 70S ribosome it contacts the 23S rRNA (bridge B1a) and protein L5 of the 50S subunit (bridge B1b), connecting the 2 subunits; these bridges are implicated in subunit movement. Contacts the tRNAs in the A and P-sites. The sequence is that of Small ribosomal subunit protein uS13 from Pseudoalteromonas atlantica (strain T6c / ATCC BAA-1087).